We begin with the raw amino-acid sequence, 347 residues long: Ferredoxin--NADP reductase 1 (347 aa).

Residues Thr26, Asp45, Gln53, Tyr58, Val98, Phe133, Asp298, and Ser339 each coordinate FAD.

The protein belongs to the ferredoxin--NADP reductase type 2 family. As to quaternary structure, homodimer. Requires FAD as cofactor.

The enzyme catalyses 2 reduced [2Fe-2S]-[ferredoxin] + NADP(+) + H(+) = 2 oxidized [2Fe-2S]-[ferredoxin] + NADPH. In Chloroherpeton thalassium (strain ATCC 35110 / GB-78), this protein is Ferredoxin--NADP reductase 1.